Reading from the N-terminus, the 443-residue chain is Chromosomal replication initiator protein DnaA (443 aa).

Residues Met1–Lys73 form a domain I, interacts with DnaA modulators region. The tract at residues Lys73–Ser106 is domain II. A domain III, AAA+ region region spans residues Thr107–Ser323. The ATP site is built by Gly151, Gly153, Lys154, and Thr155. Positions Asn324 to Tyr443 are domain IV, binds dsDNA.

This sequence belongs to the DnaA family. In terms of assembly, oligomerizes as a right-handed, spiral filament on DNA at oriC.

It is found in the cytoplasm. In terms of biological role, plays an essential role in the initiation and regulation of chromosomal replication. ATP-DnaA binds to the origin of replication (oriC) to initiate formation of the DNA replication initiation complex once per cell cycle. Binds the DnaA box (a 9 base pair repeat at the origin) and separates the double-stranded (ds)DNA. Forms a right-handed helical filament on oriC DNA; dsDNA binds to the exterior of the filament while single-stranded (ss)DNA is stabiized in the filament's interior. The ATP-DnaA-oriC complex binds and stabilizes one strand of the AT-rich DNA unwinding element (DUE), permitting loading of DNA polymerase. After initiation quickly degrades to an ADP-DnaA complex that is not apt for DNA replication. Binds acidic phospholipids. This Thermoanaerobacter pseudethanolicus (strain ATCC 33223 / 39E) (Clostridium thermohydrosulfuricum) protein is Chromosomal replication initiator protein DnaA.